A 473-amino-acid chain; its full sequence is Cysteine--tRNA ligase (473 aa).

Position 27 (Cys-27) interacts with Zn(2+). The short motif at 29–39 is the 'HIGH' region element; sequence ITPYDHVHVGH. Zn(2+)-binding residues include Cys-213, His-238, and Glu-242. Residues 271-275 carry the 'KMSKS' region motif; sequence KMSKS. An ATP-binding site is contributed by Lys-274.

It belongs to the class-I aminoacyl-tRNA synthetase family. The cofactor is Zn(2+).

The protein localises to the cytoplasm. The catalysed reaction is tRNA(Cys) + L-cysteine + ATP = L-cysteinyl-tRNA(Cys) + AMP + diphosphate. The polypeptide is Cysteine--tRNA ligase (Pyrobaculum calidifontis (strain DSM 21063 / JCM 11548 / VA1)).